A 149-amino-acid polypeptide reads, in one-letter code: uncharacterized protein (149 aa).

The segment covering Glu-130–Lys-144 has biased composition (basic and acidic residues). The segment at Glu-130 to Glu-149 is disordered.

This is an uncharacterized protein from Methanocaldococcus jannaschii (strain ATCC 43067 / DSM 2661 / JAL-1 / JCM 10045 / NBRC 100440) (Methanococcus jannaschii).